The following is a 239-amino-acid chain: MAANSRKAAAILLSGGLDSMVTAAIAQEQGYAVHALTIDYGQRHKVELQSARLIAAKIGAERHVEIEADLRALGGSALTDDIDVPKCGVGNDIPVTYVPARNLVFLSLTTAFAEASGARDIFIGVNALDYSGYPDCRPEFIESFAVTANLATKAGVEESAPFKIHAPLQHMTKADIARECARLGLESAWSWSCYDPLPGLKPCGACDSCRLRRKGFAEAGLADGLDYPADAPPIQGENA.

13–23 is a binding site for ATP; sequence LSGGLDSMVTA. Residues Cys-193, Cys-203, Cys-206, and Cys-209 each coordinate Zn(2+).

It belongs to the QueC family. Requires Zn(2+) as cofactor.

It catalyses the reaction 7-carboxy-7-deazaguanine + NH4(+) + ATP = 7-cyano-7-deazaguanine + ADP + phosphate + H2O + H(+). It participates in purine metabolism; 7-cyano-7-deazaguanine biosynthesis. In terms of biological role, catalyzes the ATP-dependent conversion of 7-carboxy-7-deazaguanine (CDG) to 7-cyano-7-deazaguanine (preQ(0)). This chain is 7-cyano-7-deazaguanine synthase, found in Erythrobacter litoralis (strain HTCC2594).